We begin with the raw amino-acid sequence, 416 residues long: MTTRNDCLALDAQDSLAPLRQQFALPEGVIYLDGNSLGARPVAALARAQAVIAEEWGNGLIRSWNSAGWRDLSERLGNRLATLIGARDGEVVVTDTTSINLFKVLSAALRVQATRSPERRVIVTETSNFPTDLYIAEGLADMLQQGYTLRLVDSPEELPQAIDQDTAVVMLTHVNYKTGYMHDMQALTALSHECGALAIWDLAHSAGAVPVDLHQAGADYAIGCTYKYLNGGPGSQAFVWVSPQLCDLVPQPLSGWFGHSRQFAMEPRYEPSNGIARYLCGTQPITSLAMVECGLDVFAQTDMASLRRKSLALTDLFIELVEQRCAAHELTLVTPREHAKRGSHVSFEHPEGYAVIQALIDRGVIGDYREPRIMRFGFTPLYTTFTEVWDAVQILGEILDRKTWAQAQFQVRHSVT.

Pyridoxal 5'-phosphate contacts are provided by residues threonine 97, serine 98, 129 to 132 (FPTD), threonine 172, aspartate 201, histidine 204, and tyrosine 226. Lysine 227 bears the N6-(pyridoxal phosphate)lysine mark. Positions 256 and 282 each coordinate pyridoxal 5'-phosphate.

The protein belongs to the kynureninase family. As to quaternary structure, homodimer. Pyridoxal 5'-phosphate is required as a cofactor.

It carries out the reaction L-kynurenine + H2O = anthranilate + L-alanine + H(+). The catalysed reaction is 3-hydroxy-L-kynurenine + H2O = 3-hydroxyanthranilate + L-alanine + H(+). It participates in amino-acid degradation; L-kynurenine degradation; L-alanine and anthranilate from L-kynurenine: step 1/1. The protein operates within cofactor biosynthesis; NAD(+) biosynthesis; quinolinate from L-kynurenine: step 2/3. Functionally, catalyzes the cleavage of L-kynurenine (L-Kyn) and L-3-hydroxykynurenine (L-3OHKyn) into anthranilic acid (AA) and 3-hydroxyanthranilic acid (3-OHAA), respectively. The chain is Kynureninase from Pseudomonas fluorescens.